The sequence spans 160 residues: 6,7-dimethyl-8-ribityllumazine synthase (160 aa).

5-amino-6-(D-ribitylamino)uracil-binding positions include tryptophan 27, 59–61, and 81–83; these read AIE and VVI. Residue 86–87 coordinates (2S)-2-hydroxy-3-oxobutyl phosphate; it reads ET. Histidine 89 acts as the Proton donor in catalysis. Asparagine 114 contacts 5-amino-6-(D-ribitylamino)uracil. Residue arginine 128 participates in (2S)-2-hydroxy-3-oxobutyl phosphate binding.

This sequence belongs to the DMRL synthase family. As to quaternary structure, homopentamer.

It catalyses the reaction (2S)-2-hydroxy-3-oxobutyl phosphate + 5-amino-6-(D-ribitylamino)uracil = 6,7-dimethyl-8-(1-D-ribityl)lumazine + phosphate + 2 H2O + H(+). The protein operates within cofactor biosynthesis; riboflavin biosynthesis; riboflavin from 2-hydroxy-3-oxobutyl phosphate and 5-amino-6-(D-ribitylamino)uracil: step 1/2. Its function is as follows. Catalyzes the formation of 6,7-dimethyl-8-ribityllumazine by condensation of 5-amino-6-(D-ribitylamino)uracil with 3,4-dihydroxy-2-butanone 4-phosphate. This is the penultimate step in the biosynthesis of riboflavin. The protein is 6,7-dimethyl-8-ribityllumazine synthase of Mycobacterium ulcerans (strain Agy99).